The chain runs to 282 residues: 3-methyl-2-oxobutanoate hydroxymethyltransferase (282 aa).

Residues Asp44 and Asp83 each coordinate Mg(2+). Residues 44–45 (DS), Asp83, and Lys113 each bind 3-methyl-2-oxobutanoate. Glu115 contacts Mg(2+). Glu182 functions as the Proton acceptor in the catalytic mechanism.

It belongs to the PanB family. In terms of assembly, homodecamer; pentamer of dimers. It depends on Mg(2+) as a cofactor.

It localises to the cytoplasm. It catalyses the reaction 3-methyl-2-oxobutanoate + (6R)-5,10-methylene-5,6,7,8-tetrahydrofolate + H2O = 2-dehydropantoate + (6S)-5,6,7,8-tetrahydrofolate. It functions in the pathway cofactor biosynthesis; (R)-pantothenate biosynthesis; (R)-pantoate from 3-methyl-2-oxobutanoate: step 1/2. In terms of biological role, catalyzes the reversible reaction in which hydroxymethyl group from 5,10-methylenetetrahydrofolate is transferred onto alpha-ketoisovalerate to form ketopantoate. The polypeptide is 3-methyl-2-oxobutanoate hydroxymethyltransferase (Dehalococcoides mccartyi (strain ATCC BAA-2266 / KCTC 15142 / 195) (Dehalococcoides ethenogenes (strain 195))).